Consider the following 662-residue polypeptide: Cytochrome bo(3) ubiquinol oxidase subunit 1 (662 aa).

The Extracellular segment spans residues 1-14; that stretch reads MFGKLTFDAIPYHE. Residues 15–35 form a helical membrane-spanning segment; sequence PIIMITYIAIILIALCIASTI. Topologically, residues 36–58 are cytoplasmic; the sequence is TYYKKWKYLWYEWFTTVDHKKIS. The chain crosses the membrane as a helical span at residues 59–79; that stretch reads IMYGILAFVMLFRGFVDAILM. The a ubiquinone site is built by Arg-71, Asp-75, and His-98. At 80 to 106 the chain is on the extracellular side; it reads RTQQVVASAGFKGFLPPHHYDQIFTAH. Heme b is bound at residue His-106. Residues 107–127 form a helical membrane-spanning segment; the sequence is GVIMIFFVAMPLVIGLMNLVI. Residues 128-145 lie on the Cytoplasmic side of the membrane; sequence PLQIGARDVAFPFLNNLS. A helical membrane pass occupies residues 146-166; the sequence is FWLNVSSAVLLTLSLGIGEFA. Residues 167 to 189 are Extracellular-facing; it reads QTGWLAYPPLSGIKYSSGVGVDY. Trp-170 contributes to the heme b binding site. Residues 190–210 traverse the membrane as a helical segment; sequence WIWSLQISGVGTTLTGINFLV. Topologically, residues 211–232 are cytoplasmic; it reads TILKMRAPGMSFFKMPVFTWTS. Residues 233-253 form a helical membrane-spanning segment; that stretch reads LCTNILIVISFPVLTVTLVLL. At 254–277 the chain is on the extracellular side; sequence TLDRYFNFHFFTNDLGGNAMMYVN. The helical transmembrane segment at 278–298 threads the bilayer; the sequence is LIWIWGHPEVYILVLPVFGVF. His-284 provides a ligand contact to Cu(2+). Residues 284–288 constitute a cross-link (1'-histidyl-3'-tyrosine (His-Tyr)); that stretch reads HPEVY. Residue Tyr-288 participates in Fe(II)-heme o binding. Over 299–309 the chain is Cytoplasmic; sequence SEVVATFSKKR. The helical transmembrane segment at 310-330 threads the bilayer; that stretch reads LFGYVSLVWATLSITILSFIV. Residues 331–346 are Extracellular-facing; it reads WLHHFFTMGAGADVNT. His-333 and His-334 together coordinate Cu(2+). Residues 347 to 367 traverse the membrane as a helical segment; the sequence is FFGITTMIIAIPTGVKIFNWL. The Cytoplasmic segment spans residues 368 to 380; it reads FTIYQGRVHMHSS. Residues 381–401 form a helical membrane-spanning segment; sequence ILWTLGFLVTFSIGGMTGVLL. Residues 402 to 413 lie on the Extracellular side of the membrane; it reads SVPPADFVLHNS. Fe(II)-heme o-binding residues include His-411 and His-419. A helical transmembrane segment spans residues 414 to 434; the sequence is LFLVAHFHNVIIGGVVFGCFA. Heme b is bound at residue His-421. Over 435 to 456 the chain is Cytoplasmic; the sequence is GINYWFPKLFGFVLNEIWGKRA. The chain crosses the membrane as a helical span at residues 457-477; that stretch reads FWFWIIGFFLAFIPLYFLGLM. Topologically, residues 478 to 493 are extracellular; that stretch reads GMTRRLSQNIDSEFHM. Residues Arg-481 and Arg-482 each coordinate heme b. A helical membrane pass occupies residues 494–514; that stretch reads LLCIAAIGACFIGIGIICQVI. At 515–586 the chain is on the cytoplasmic side; that stretch reads QFFISIKERR…INSINYHDIH (72 aa). A helical membrane pass occupies residues 587–607; sequence MPKNTGLGFMISIFSLFFGFS. Position 608 (Ala-608) is a topological domain, extracellular. A helical membrane pass occupies residues 609-629; that stretch reads VWHITWLCILSFLAIIISLFI. Over 630–662 the chain is Cytoplasmic; sequence NSLNEDTEYTISAEEIKKIEHQYWKNIQKAGLK.

It belongs to the heme-copper respiratory oxidase family. The cytochrome bo(3) ubiquinol oxidase complex is a heterooctamer of two A chains, two B chains, two C chains and two D chains. The cofactor is Cu(2+). Heme b serves as cofactor. Requires Fe(II)-heme o as cofactor.

The protein localises to the cell membrane. It catalyses the reaction 2 a ubiquinol + O2 + n H(+)(in) = 2 a ubiquinone + 2 H2O + n H(+)(out). Cytochrome bo(3) ubiquinol oxidase is the terminal enzyme in the aerobic respiratory chain. Catalyzes the four-electron reduction of O2 to water, using a ubiquinol as a membrane soluble electron donor for molecular oxygen reduction. Has proton pump activity across the membrane in addition to electron transfer, pumping 2 protons/electron and generating a proton motive force. All the redox centers of this enzyme complex are located within the largest subunit, subunit I. Protons are probably pumped via D- and K- channels found in this subunit. The polypeptide is Cytochrome bo(3) ubiquinol oxidase subunit 1 (cyoB) (Buchnera aphidicola subsp. Acyrthosiphon pisum (strain APS) (Acyrthosiphon pisum symbiotic bacterium)).